The primary structure comprises 446 residues: Glutamyl-tRNA reductase (446 aa).

Substrate is bound by residues 49 to 52, serine 107, 112 to 114, and glutamine 118; these read TCNR and EPQ. Residue cysteine 50 is the Nucleophile of the active site. Residue 187 to 192 participates in NADP(+) binding; it reads GAGETI. The tract at residues 417-446 is disordered; the sequence is NANEDTRESVDKEQTGTTQGAARGDQRSTG. The segment covering 420-430 has biased composition (basic and acidic residues); sequence EDTRESVDKEQ.

This sequence belongs to the glutamyl-tRNA reductase family. In terms of assembly, homodimer.

It catalyses the reaction (S)-4-amino-5-oxopentanoate + tRNA(Glu) + NADP(+) = L-glutamyl-tRNA(Glu) + NADPH + H(+). It functions in the pathway porphyrin-containing compound metabolism; protoporphyrin-IX biosynthesis; 5-aminolevulinate from L-glutamyl-tRNA(Glu): step 1/2. Catalyzes the NADPH-dependent reduction of glutamyl-tRNA(Glu) to glutamate 1-semialdehyde (GSA). The polypeptide is Glutamyl-tRNA reductase (Alkalilimnicola ehrlichii (strain ATCC BAA-1101 / DSM 17681 / MLHE-1)).